A 647-amino-acid polypeptide reads, in one-letter code: CRE-binding bZIP protein SKO1 (647 aa).

Disordered regions lie at residues 1 to 119 (MSSE…GSKR), 135 to 204 (STTN…QMPG), 305 to 331 (TPTT…TSTK), and 353 to 429 (KENE…EEQE). A compositionally biased stretch (polar residues) spans 51–85 (RNNSTSTITQHSQRSTHSLNSIPEENGNSTVTDNS). Phosphoserine is present on S94. A Phosphothreonine modification is found at T113. Low complexity-rich tracts occupy residues 138-194 (NPSQ…SGNG) and 305-329 (TPTT…PNTS). Polar residues-rich tracts occupy residues 357-368 (NLTTQIENNDQF) and 396-405 (RKNSAVTTAP). S399 carries the post-translational modification Phosphoserine. In terms of domain architecture, bZIP spans 429–492 (ERKRKEFLER…PSSSSNSQFN (64 aa)). The tract at residues 430–451 (RKRKEFLERNRVAASKFRKRKK) is basic motif. Residues 454 to 461 (IKKIENDL) form a leucine-zipper region. Phosphoserine is present on S558.

This sequence belongs to the bZIP family.

The protein localises to the nucleus. In terms of biological role, binds to the CRE motif 5'-TGACGTCA-3' and acts as a repressor of transcription of the SUC2 gene and most probably other genes. This is CRE-binding bZIP protein SKO1 (SKO1) from Saccharomyces cerevisiae (strain ATCC 204508 / S288c) (Baker's yeast).